Reading from the N-terminus, the 72-residue chain is ATP synthase subunit L (72 aa).

F-type ATP synthases have 2 components, the catalytic core F(1) and the membrane-embedded component F(0), linked together by a central stalk and a peripheral stalk. The central stalk, also called rotor shaft, is often seen as part of F(1). The peripheral stalk is seen as part of F(0). F(0) contains the membrane channel next to the rotor. F-type ATP synthases form dimers but each monomer functions independently in ATP generation. The dimer consists of 18 different polypeptides: ATP1 (subunit alpha, part of F(1), 3 molecules per monomer), ATP2 (subunit beta, part of F(1), 3 molecules per monomer), ATP3 (subunit gamma, part of the central stalk), ATP4 (subunit b, part of the peripheral stalk), ATP5/OSCP (subunit 5/OSCP, part of the peripheral stalk), ATP6 (subunit a, part of the peripheral stalk), ATP7 (subunit d, part of the peripheral stalk), ATP8 (subunit 8, part of the peripheral stalk), OLI1 (subunit c, part of the rotor, 10 molecules per monomer), ATP14 (subunit h, part of the peripheral stalk), ATP15 (subunit epsilon, part of the central stalk), ATP16 (subunit delta, part of the central stalk), ATP17 (subunit f, part of the peripheral stalk), ATP18 (subunit i/j, part of the peripheral stalk). Dimer-specific subunits are ATP19 (subunit k, at interface between monomers), ATP20 (subunit g, at interface between monomers), TIM11 (subunit e, at interface between monomers). Also contains subunit L.

It is found in the mitochondrion inner membrane. Functionally, mitochondrial membrane ATP synthase (F(1)F(0) ATP synthase or Complex V) produces ATP from ADP in the presence of a proton gradient across the membrane which is generated by electron transport complexes of the respiratory chain. F-type ATP synthases consist of two structural domains, F(1) - containing the extramembraneous catalytic core, and F(0) - containing the membrane proton channel, linked together by a central stalk and a peripheral stalk. During catalysis, ATP synthesis in the catalytic domain of F(1) is coupled via a rotary mechanism of the central stalk subunits to proton translocation. The protein is ATP synthase subunit L of Pichia angusta (Yeast).